Here is a 379-residue protein sequence, read N- to C-terminus: Cobalt-precorrin-5B C(1)-methyltransferase (379 aa).

It belongs to the CbiD family.

The enzyme catalyses Co-precorrin-5B + S-adenosyl-L-methionine = Co-precorrin-6A + S-adenosyl-L-homocysteine. Its pathway is cofactor biosynthesis; adenosylcobalamin biosynthesis; cob(II)yrinate a,c-diamide from sirohydrochlorin (anaerobic route): step 6/10. In terms of biological role, catalyzes the methylation of C-1 in cobalt-precorrin-5B to form cobalt-precorrin-6A. This Edwardsiella ictaluri (strain 93-146) protein is Cobalt-precorrin-5B C(1)-methyltransferase.